Here is a 389-residue protein sequence, read N- to C-terminus: 1-deoxy-D-xylulose 5-phosphate reductoisomerase (389 aa).

Residues Ser-11, Gly-12, Ser-13, Val-14, Asn-39, and Asn-122 each contribute to the NADPH site. A 1-deoxy-D-xylulose 5-phosphate-binding site is contributed by Lys-123. Glu-124 serves as a coordination point for NADPH. Asp-148 serves as a coordination point for Mn(2+). 1-deoxy-D-xylulose 5-phosphate is bound by residues Ser-149, Glu-150, Ser-174, and His-197. Glu-150 lines the Mn(2+) pocket. Residue Gly-203 participates in NADPH binding. 1-deoxy-D-xylulose 5-phosphate-binding residues include Ser-210, Asn-215, Lys-216, and Glu-219. Glu-219 serves as a coordination point for Mn(2+).

The protein belongs to the DXR family. Mg(2+) serves as cofactor. It depends on Mn(2+) as a cofactor.

It catalyses the reaction 2-C-methyl-D-erythritol 4-phosphate + NADP(+) = 1-deoxy-D-xylulose 5-phosphate + NADPH + H(+). The protein operates within isoprenoid biosynthesis; isopentenyl diphosphate biosynthesis via DXP pathway; isopentenyl diphosphate from 1-deoxy-D-xylulose 5-phosphate: step 1/6. Its function is as follows. Catalyzes the NADPH-dependent rearrangement and reduction of 1-deoxy-D-xylulose-5-phosphate (DXP) to 2-C-methyl-D-erythritol 4-phosphate (MEP). This Leptospira borgpetersenii serovar Hardjo-bovis (strain JB197) protein is 1-deoxy-D-xylulose 5-phosphate reductoisomerase.